Here is a 598-residue protein sequence, read N- to C-terminus: Beta-fructofuranosidase, insoluble isoenzyme 2 (598 aa).

Residues 1–25 form the signal peptide; the sequence is MGVLGSRVAWAWLVQLLLLQQLAGA. The active site involves Asp69. N-linked (GlcNAc...) asparagine glycosylation is found at Asn164, Asn189, and Asn348.

The protein belongs to the glycosyl hydrolase 32 family.

It localises to the secreted. The protein localises to the extracellular space. It is found in the apoplast. Its subcellular location is the cell wall. The catalysed reaction is Hydrolysis of terminal non-reducing beta-D-fructofuranoside residues in beta-D-fructofuranosides.. May play a role in sucrose partitioning during seed development. In Oryza sativa subsp. indica (Rice), this protein is Beta-fructofuranosidase, insoluble isoenzyme 2 (CIN2).